A 372-amino-acid polypeptide reads, in one-letter code: MTDTTLAPEVTLSDLPLREELRGESAYGAPQLNVSVRLNTNENPYPPSEALIADLVETVRATATELNRYPERDSVELRDALADYITHQTGVQVTRENLWAANGSNEVLQQLLQAFGGPGRKALGFQPSYSMHPILSKGTQTEFIAIPRGADFRIDMDAALAAIEEHVPDIIFVTTPNNPTGDITSLADIEKIINAAPGIVIVDEAYAEFSPSPSATTLITRYPAKLVVSRTMSKAFDFAGGRLGYFVAAPAFIEAVMLVRLPYHLSALSQAAATVALRHRDDTLATVAKLSSERIRVAARLEELGYTQVPSESNFIFFGKFTDQHTAWEAFLDRGVLIRDVGVSGHLRVTIGLPEENDSFLAAAAEISGLNL.

At Lys234 the chain carries N6-(pyridoxal phosphate)lysine.

It belongs to the class-II pyridoxal-phosphate-dependent aminotransferase family. Histidinol-phosphate aminotransferase subfamily. In terms of assembly, homodimer. Requires pyridoxal 5'-phosphate as cofactor.

The enzyme catalyses L-histidinol phosphate + 2-oxoglutarate = 3-(imidazol-4-yl)-2-oxopropyl phosphate + L-glutamate. Its pathway is amino-acid biosynthesis; L-histidine biosynthesis; L-histidine from 5-phospho-alpha-D-ribose 1-diphosphate: step 7/9. The protein is Histidinol-phosphate aminotransferase (hisC) of Corynebacterium efficiens (strain DSM 44549 / YS-314 / AJ 12310 / JCM 11189 / NBRC 100395).